The sequence spans 162 residues: Endoribonuclease YbeY (162 aa).

Zn(2+) contacts are provided by His128, His132, and His138.

It belongs to the endoribonuclease YbeY family. Zn(2+) serves as cofactor.

Its subcellular location is the cytoplasm. Functionally, single strand-specific metallo-endoribonuclease involved in late-stage 70S ribosome quality control and in maturation of the 3' terminus of the 16S rRNA. In Lactococcus lactis subsp. lactis (strain IL1403) (Streptococcus lactis), this protein is Endoribonuclease YbeY.